A 162-amino-acid chain; its full sequence is UPF0114 protein PSEEN0819 (162 aa).

Transmembrane regions (helical) follow at residues 15–35, 53–73, and 136–156; these read LLAP…LKFF, LVLV…LVMV, and LMWY…MGYL.

Belongs to the UPF0114 family.

It localises to the cell membrane. In Pseudomonas entomophila (strain L48), this protein is UPF0114 protein PSEEN0819.